The primary structure comprises 78 residues: Large ribosomal subunit protein eL38 (78 aa).

It belongs to the eukaryotic ribosomal protein eL38 family. As to quaternary structure, component of the large ribosomal subunit. Mature ribosomes consist of a small (40S) and a large (60S) subunit. The 40S subunit contains about 32 different proteins and 1 molecule of RNA (18S). The 60S subunit contains 45 different proteins and 3 molecules of RNA (25S, 5.8S and 5S).

Its subcellular location is the cytoplasm. In terms of biological role, component of the ribosome, a large ribonucleoprotein complex responsible for the synthesis of proteins in the cell. The small ribosomal subunit (SSU) binds messenger RNAs (mRNAs) and translates the encoded message by selecting cognate aminoacyl-transfer RNA (tRNA) molecules. The large subunit (LSU) contains the ribosomal catalytic site termed the peptidyl transferase center (PTC), which catalyzes the formation of peptide bonds, thereby polymerizing the amino acids delivered by tRNAs into a polypeptide chain. The nascent polypeptides leave the ribosome through a tunnel in the LSU and interact with protein factors that function in enzymatic processing, targeting, and the membrane insertion of nascent chains at the exit of the ribosomal tunnel. The chain is Large ribosomal subunit protein eL38 from Candida albicans (strain SC5314 / ATCC MYA-2876) (Yeast).